A 319-amino-acid polypeptide reads, in one-letter code: Coproporphyrin III ferrochelatase 2 (319 aa).

Fe-coproporphyrin III contacts are provided by residues Tyr-13, Arg-30, 46-47, Ser-54, and Tyr-125; that span reads RY. The Fe(2+) site is built by His-181 and Glu-262.

The protein belongs to the ferrochelatase family.

The protein localises to the cytoplasm. It carries out the reaction Fe-coproporphyrin III + 2 H(+) = coproporphyrin III + Fe(2+). It participates in porphyrin-containing compound metabolism; protoheme biosynthesis. Involved in coproporphyrin-dependent heme b biosynthesis. Catalyzes the insertion of ferrous iron into coproporphyrin III to form Fe-coproporphyrin III. This is Coproporphyrin III ferrochelatase 2 from Bacillus cereus (strain ATCC 14579 / DSM 31 / CCUG 7414 / JCM 2152 / NBRC 15305 / NCIMB 9373 / NCTC 2599 / NRRL B-3711).